Reading from the N-terminus, the 107-residue chain is Nucleoid-associated protein R00231 (107 aa).

The protein belongs to the YbaB/EbfC family. In terms of assembly, homodimer.

Its subcellular location is the cytoplasm. It localises to the nucleoid. Binds to DNA and alters its conformation. May be involved in regulation of gene expression, nucleoid organization and DNA protection. This Rhizobium meliloti (strain 1021) (Ensifer meliloti) protein is Nucleoid-associated protein R00231.